The sequence spans 241 residues: Probable xyloglucan-specific endo-beta-1,4-glucanase A (241 aa).

The N-terminal stretch at 1–18 is a signal peptide; sequence MKFNLALALSLTVATAEA.

It belongs to the glycosyl hydrolase 12 (cellulase H) family.

The protein localises to the secreted. The enzyme catalyses xyloglucan + H2O = xyloglucan oligosaccharides.. In terms of biological role, catalyzes endohydrolysis of 1,4-beta-D-glucosidic linkages in xyloglucan with retention of the beta-configuration of the glycosyl residues. Specific for xyloglucan and does not hydrolyze other cell wall components. This Aspergillus clavatus (strain ATCC 1007 / CBS 513.65 / DSM 816 / NCTC 3887 / NRRL 1 / QM 1276 / 107) protein is Probable xyloglucan-specific endo-beta-1,4-glucanase A (xgeA).